Consider the following 247-residue polypeptide: ATP synthase subunit a, chloroplastic (247 aa).

5 consecutive transmembrane segments (helical) span residues 38-58 (QVLI…IVTV), 95-115 (VPFI…GALL), 134-154 (INTT…AGLS), 199-219 (LVVV…VMFL), and 220-240 (GLFT…AYIG).

Belongs to the ATPase A chain family. F-type ATPases have 2 components, CF(1) - the catalytic core - and CF(0) - the membrane proton channel. CF(1) has five subunits: alpha(3), beta(3), gamma(1), delta(1), epsilon(1). CF(0) has four main subunits: a, b, b' and c.

The protein resides in the plastid. It is found in the chloroplast thylakoid membrane. Functionally, key component of the proton channel; it plays a direct role in the translocation of protons across the membrane. The polypeptide is ATP synthase subunit a, chloroplastic (Populus alba (White poplar)).